The primary structure comprises 446 residues: Methanogenesis regulatory protein FilR1 (446 aa).

A Response regulatory domain is found at 297–416 (DVMIVEDDLG…QRLPEIAEEA (120 aa)). Asp-350 carries the 4-aspartylphosphate modification.

Phosphorylated by FilI.

Its function is as follows. Member of the two-component regulatory system FilI/FilRs, which is involved in the regulation of methanogenesis. Regulates its own expression, expression of the filI-filR2 operon, and of genes involved in methanogenesis such as acs1, acs4 and mtrABC. Acts by binding to the promoters. In Methanothrix harundinacea (strain 6Ac) (Methanosaeta harundinacea), this protein is Methanogenesis regulatory protein FilR1.